The sequence spans 347 residues: Malate dehydrogenase, mitochondrial (347 aa).

The N-terminal 27 residues, 1-27 (MKASILRSVRSAVSRSSSSNRLLSRSF), are a transit peptide targeting the mitochondrion. NAD(+) contacts are provided by residues 41–47 (GAAGGIG) and Asp-67. The substrate site is built by Arg-114 and Arg-120. NAD(+)-binding positions include Asn-127 and 150 to 152 (ISN). The substrate site is built by Asn-152 and Arg-186. Residue His-210 is the Proton acceptor of the active site. Residue Met-261 coordinates NAD(+).

This sequence belongs to the LDH/MDH superfamily. MDH type 1 family. Homodimer.

The protein resides in the mitochondrion matrix. The catalysed reaction is (S)-malate + NAD(+) = oxaloacetate + NADH + H(+). This is Malate dehydrogenase, mitochondrial (MMDH) from Citrullus lanatus (Watermelon).